The sequence spans 718 residues: MANKKCPVMHGGATEISMSNMEWWPKALNLDILHQHDSKTNPMGAGFNYREQVKLLDVEALKKDLHALMTDSQPWWPADWGHYGGLMIRLSWHAAGTYRTADGRGGAGRGNQRFAPLNSWPDNVNLDKARRLLWPLKKKYGNKLSWADLIAYAGTIAYESMGLKTFGFAFGREDIWHPEKDIYWGAEKEWLAPSGSEGSRYSGERDLENPLASVMMGLIYVNPEGVDGHPDPLKTANDVRVTFERMAMNDEETVALTAGGHTVGKCHGNGDAELLGPVPEGADVEDQGLGWINKSQRGIGRDTVSSGLEGAWTTHPTQWDNGYFTLLLNHEWQLNKSPAGAWQWEPINIKEEDKPVDVEDLTQRYNPIMTDADMAMKLDPDYQIISARFDKDPEYFSDVFARTWFKLTHRDMGPKTRYIGPDVPAVDLLWQDPVPKGRSDYDVEAVKAQIAASSLSVSDMVTTAWDSARTFRGSDLRGGANGARIRLAPQRDWQANEPERLNRVLAVLEPIAAKSGVSVADVIVLAGNLAVEQAAKAAGFAIKVPFSPGRGDATADMTDVESFHVLEPLHDGYRNWLKKDYAVSAEELMLDQTQLLGLTAQEMTVLLGGMRVLGTNYNGESHGAFTEHQGALTNDFFVNLTDMNNTWQPVSNNLYEISDRETAKLKWTATRVDLVFGSNSILRAYAEVYAQDDNQQKFVEDFVTTWAKVMNSDRFDLD.

A cross-link (tryptophyl-tyrosyl-methioninium (Trp-Tyr) (with M-246)) is located at residues 92-220; that stretch reads WHAAGTYRTA…LASVMMGLIY (129 aa). His93 acts as the Proton acceptor in catalysis. The segment at residues 220-246 is a cross-link (tryptophyl-tyrosyl-methioninium (Tyr-Met) (with W-92)); that stretch reads YVNPEGVDGHPDPLKTANDVRVTFERM. His261 lines the heme b pocket.

Belongs to the peroxidase family. Peroxidase/catalase subfamily. Homodimer or homotetramer. Heme b serves as cofactor. Post-translationally, formation of the three residue Trp-Tyr-Met cross-link is important for the catalase, but not the peroxidase activity of the enzyme.

It catalyses the reaction H2O2 + AH2 = A + 2 H2O. The enzyme catalyses 2 H2O2 = O2 + 2 H2O. In terms of biological role, bifunctional enzyme with both catalase and broad-spectrum peroxidase activity. In Shewanella halifaxensis (strain HAW-EB4), this protein is Catalase-peroxidase.